The following is a 467-amino-acid chain: Tyrosine phenol-lyase (467 aa).

Residue lysine 268 is modified to N6-(pyridoxal phosphate)lysine.

Belongs to the beta-eliminating lyase family. In terms of assembly, homotetramer. Pyridoxal 5'-phosphate is required as a cofactor.

It catalyses the reaction L-tyrosine + H2O = phenol + pyruvate + NH4(+). The polypeptide is Tyrosine phenol-lyase (Nostoc punctiforme (strain ATCC 29133 / PCC 73102)).